Reading from the N-terminus, the 152-residue chain is Fibroblast growth factor 1 (152 aa).

A2 is modified (N-acetylalanine). Residues 2–15 constitute a propeptide that is removed on maturation; that stretch reads AEGEITTFTALTEK. Position 33 (N33) interacts with heparin. Residues 127 to 143 form a heparin-binding region; that stretch reads KKNGSCKRGPRTHYGQK.

Belongs to the heparin-binding growth factors family. In terms of assembly, monomer. Homodimer. Interacts with FGFR1, FGFR2, FGFR3 and FGFR4. Affinity between fibroblast growth factors (FGFs) and their receptors is increased by heparan sulfate glycosaminoglycans that function as coreceptors. Found in a complex with FGFBP1, FGF1 and FGF2. Interacts with FGFBP1. Part of a Cu(2+)-dependent multiprotein aggregate containing FGF1, S100A13 and SYT1. Interacts with SYT1. Interacts with S100A13. Interacts with LRRC59. Interacts with CSNKA, CSNKB and FIBP. While binding with LRRC59, CSNKA and FIBP seem mutually exclusive, CSNKB and FIBP may cooperatively interact with FGF1. Forms a ternary complex with FGFR1 and ITGAV:ITGB3 and induces the recruitment of PTPN11 to the complex. Post-translationally, in the nucleus, phosphorylated by PKC/PRKCD.

It is found in the secreted. The protein localises to the cytoplasm. Its subcellular location is the cell cortex. It localises to the cytosol. The protein resides in the nucleus. Plays an important role in the regulation of cell survival, cell division, angiogenesis, cell differentiation and cell migration. Functions as a potent mitogen in vitro. Acts as a ligand for FGFR1 and integrins. Binds to FGFR1 in the presence of heparin leading to FGFR1 dimerization and activation via sequential autophosphorylation on tyrosine residues which act as docking sites for interacting proteins, leading to the activation of several signaling cascades. Binds to integrin ITGAV:ITGB3. Its binding to integrin, subsequent ternary complex formation with integrin and FGFR1, and the recruitment of PTPN11 to the complex are essential for FGF1 signaling. Induces the phosphorylation and activation of FGFR1, FRS2, MAPK3/ERK1, MAPK1/ERK2 and AKT1. Can induce angiogenesis. In Sus scrofa (Pig), this protein is Fibroblast growth factor 1 (FGF1).